The following is a 607-amino-acid chain: Glutamine--fructose-6-phosphate aminotransferase [isomerizing] (607 aa).

The active-site Nucleophile; for GATase activity is cysteine 2. The region spanning 2–217 (CGIIGIIGND…DGDWAVLTRN (216 aa)) is the Glutamine amidotransferase type-2 domain. 2 consecutive SIS domains span residues 283–422 (IGID…ARGA) and 455–597 (VCHD…VDQP). Catalysis depends on lysine 602, which acts as the For Fru-6P isomerization activity.

Homodimer.

The protein localises to the cytoplasm. The enzyme catalyses D-fructose 6-phosphate + L-glutamine = D-glucosamine 6-phosphate + L-glutamate. Catalyzes the first step in hexosamine metabolism, converting fructose-6P into glucosamine-6P using glutamine as a nitrogen source. This Brucella abortus biovar 1 (strain 9-941) protein is Glutamine--fructose-6-phosphate aminotransferase [isomerizing].